Here is a 141-residue protein sequence, read N- to C-terminus: Keratin-associated protein 19-2 (141 aa).

A 48 X 2 AA repeats of G-[YCGS] region spans residues 5-135; it reads SGYSGGLGYG…CRRSSCCGGY (131 aa).

This sequence belongs to the KRTAP type 19 family. Interacts with hair keratins. Strong expression in narrowly defined pattern restricted to the lower and middle cortical regions of the hair shaft in both developing and cycling hair. During hair follicle regression (catagen), expression levels decrease until expression is no longer detectable in follicles at resting stage (telogen).

Its function is as follows. In the hair cortex, hair keratin intermediate filaments are embedded in an interfilamentous matrix, consisting of hair keratin-associated proteins (KRTAP), which are essential for the formation of a rigid and resistant hair shaft through their extensive disulfide bond cross-linking with abundant cysteine residues of hair keratins. The matrix proteins include the high-sulfur and high-glycine-tyrosine keratins. This Mus musculus (Mouse) protein is Keratin-associated protein 19-2 (Krtap19-2).